The sequence spans 258 residues: Synapse differentiation-inducing gene protein 1 (258 aa).

Over 1-181 (MDGIIEQKSM…NFLMMPPRDH (181 aa)) the chain is Cytoplasmic. S137 is modified (phosphoserine). A helical membrane pass occupies residues 182–202 (LGLSVFSMLCCFWPLGIAAFY). Residues 203–228 (LSHETNKAVAKGDLHQASTSSRRALF) are Extracellular-facing. The segment at residues 229–249 (LAVLSITIGTGVYVGVAVALI) is an intramembrane region (helical). Over 250-258 (AYLSKNNHL) the chain is Extracellular.

This sequence belongs to the CD225/Dispanin family. Homodimer. Interacts with GRIA1 and GRIA2.

The protein resides in the cell membrane. It localises to the early endosome membrane. It is found in the postsynaptic density membrane. The protein localises to the synapse. Its subcellular location is the cell projection. The protein resides in the dendrite. It localises to the dendritic spine. In terms of biological role, may regulate AMPA receptor content at nascent synapses, and have a role in postsynaptic development and maturation. In Homo sapiens (Human), this protein is Synapse differentiation-inducing gene protein 1 (SYNDIG1).